Consider the following 122-residue polypeptide: Fluoride-specific ion channel FluC (122 aa).

The next 4 helical transmembrane spans lie at 1-21 (MIGT…SRML), 34-54 (FPYG…LFFS), 60-80 (GVHI…FTTF), and 100-120 (FLNI…GFLI).

It belongs to the fluoride channel Fluc/FEX (TC 1.A.43) family.

The protein localises to the cell inner membrane. It carries out the reaction fluoride(in) = fluoride(out). Fluoride-specific ion channel. Important for reducing fluoride concentration in the cell, thus reducing its toxicity. The polypeptide is Fluoride-specific ion channel FluC (Campylobacter lari (strain RM2100 / D67 / ATCC BAA-1060)).